Here is a 167-residue protein sequence, read N- to C-terminus: Small ribosomal subunit protein uS5 (167 aa).

The S5 DRBM domain maps to 11 to 74; the sequence is LQEKLIAVNR…EKARRAMINV (64 aa).

The protein belongs to the universal ribosomal protein uS5 family. In terms of assembly, part of the 30S ribosomal subunit. Contacts proteins S4 and S8.

Its function is as follows. With S4 and S12 plays an important role in translational accuracy. Located at the back of the 30S subunit body where it stabilizes the conformation of the head with respect to the body. This Yersinia enterocolitica serotype O:8 / biotype 1B (strain NCTC 13174 / 8081) protein is Small ribosomal subunit protein uS5.